The chain runs to 127 residues: Aspartate 1-decarboxylase (127 aa).

The active-site Schiff-base intermediate with substrate; via pyruvic acid is the serine 25. Serine 25 carries the post-translational modification Pyruvic acid (Ser). Threonine 57 contributes to the substrate binding site. Tyrosine 58 (proton donor) is an active-site residue. Position 73–75 (73–75) interacts with substrate; that stretch reads GAA.

It belongs to the PanD family. Heterooctamer of four alpha and four beta subunits. It depends on pyruvate as a cofactor. Post-translationally, is synthesized initially as an inactive proenzyme, which is activated by self-cleavage at a specific serine bond to produce a beta-subunit with a hydroxyl group at its C-terminus and an alpha-subunit with a pyruvoyl group at its N-terminus.

Its subcellular location is the cytoplasm. It catalyses the reaction L-aspartate + H(+) = beta-alanine + CO2. It participates in cofactor biosynthesis; (R)-pantothenate biosynthesis; beta-alanine from L-aspartate: step 1/1. Functionally, catalyzes the pyruvoyl-dependent decarboxylation of aspartate to produce beta-alanine. This Clostridium botulinum (strain 657 / Type Ba4) protein is Aspartate 1-decarboxylase.